A 91-amino-acid polypeptide reads, in one-letter code: Putative pterin-4-alpha-carbinolamine dehydratase (91 aa).

It belongs to the pterin-4-alpha-carbinolamine dehydratase family.

The catalysed reaction is (4aS,6R)-4a-hydroxy-L-erythro-5,6,7,8-tetrahydrobiopterin = (6R)-L-erythro-6,7-dihydrobiopterin + H2O. In Halobacterium salinarum (strain ATCC 29341 / DSM 671 / R1), this protein is Putative pterin-4-alpha-carbinolamine dehydratase.